The following is a 158-amino-acid chain: C-type lectin lectoxin-Enh4 (158 aa).

The first 23 residues, 1–23 (MGQFTVVSLGLLAMFLSLSGAKG), serve as a signal peptide directing secretion. Disulfide bonds link Cys26/Cys37, Cys54/Cys154, and Cys129/Cys146. The 123-residue stretch at 33–155 (RNGVCNKLFP…CASLHPFICQ (123 aa)) folds into the C-type lectin domain. A Mannose-binding motif is present at residues 119–121 (EPN). The Ca(2+) site is built by Glu127, Asn142, and Asp143.

The protein belongs to the true venom lectin family. As to expression, expressed by the venom gland.

It localises to the secreted. Its function is as follows. Mannose-binding lectin which recognizes specific carbohydrate structures and agglutinates a variety of animal cells by binding to cell-surface glycoproteins and glycolipids. May be a calcium-dependent lectin. In Pseudoferania polylepis (Macleay's water snake), this protein is C-type lectin lectoxin-Enh4.